The primary structure comprises 282 residues: Probable xyloglucan endotransglucosylase/hydrolase protein 18 (282 aa).

Residues Met-1–Ala-26 form the signal peptide. The GH16 domain maps to Gly-27–Tyr-218. The active-site Nucleophile is Glu-104. The active-site Proton donor is the Glu-108. Glu-108 contacts xyloglucan. Asn-112 is a glycosylation site (N-linked (GlcNAc...) asparagine). Residues His-121–Asn-123, Asp-131–Glu-133, His-197–Trp-198, and Gly-202 contribute to the xyloglucan site. Cys-226 and Cys-235 are disulfide-bonded. A glycan (N-linked (GlcNAc...) asparagine) is linked at Asn-238. Residues Cys-267 and Cys-281 are joined by a disulfide bond. Position 272 (Arg-272) interacts with xyloglucan.

The protein belongs to the glycosyl hydrolase 16 family. XTH group 2 subfamily. Post-translationally, contains at least one intrachain disulfide bond essential for its enzymatic activity. As to expression, root specific.

Its subcellular location is the secreted. The protein resides in the cell wall. It localises to the extracellular space. The protein localises to the apoplast. It catalyses the reaction breaks a beta-(1-&gt;4) bond in the backbone of a xyloglucan and transfers the xyloglucanyl segment on to O-4 of the non-reducing terminal glucose residue of an acceptor, which can be a xyloglucan or an oligosaccharide of xyloglucan.. Functionally, catalyzes xyloglucan endohydrolysis (XEH) and/or endotransglycosylation (XET). Cleaves and religates xyloglucan polymers, an essential constituent of the primary cell wall, and thereby participates in cell wall construction of growing tissues. The protein is Probable xyloglucan endotransglucosylase/hydrolase protein 18 (XTH18) of Arabidopsis thaliana (Mouse-ear cress).